The sequence spans 354 residues: tRNA dimethylallyltransferase (354 aa).

28–35 (GPTATGKS) is a binding site for ATP. 30 to 35 (TATGKS) lines the substrate pocket. The interval 53–56 (DSRQ) is interaction with substrate tRNA.

Belongs to the IPP transferase family. As to quaternary structure, monomer. It depends on Mg(2+) as a cofactor.

The enzyme catalyses adenosine(37) in tRNA + dimethylallyl diphosphate = N(6)-dimethylallyladenosine(37) in tRNA + diphosphate. Its function is as follows. Catalyzes the transfer of a dimethylallyl group onto the adenine at position 37 in tRNAs that read codons beginning with uridine, leading to the formation of N6-(dimethylallyl)adenosine (i(6)A). The polypeptide is tRNA dimethylallyltransferase (Synechococcus sp. (strain JA-2-3B'a(2-13)) (Cyanobacteria bacterium Yellowstone B-Prime)).